A 351-amino-acid chain; its full sequence is Glycerol-3-phosphate dehydrogenase 1-like protein (351 aa).

12–17 (GSGNWG) is an NAD(+) binding site. A substrate-binding site is contributed by Lys-122. Ala-155 is a binding site for NAD(+). Lys-206 acts as the Proton acceptor in catalysis. Residues Arg-271, Lys-298, and Gln-300 each coordinate NAD(+). 271–272 (RN) is a binding site for substrate.

The protein belongs to the NAD-dependent glycerol-3-phosphate dehydrogenase family. As to quaternary structure, interacts with SCN5A.

It localises to the cytoplasm. The enzyme catalyses sn-glycerol 3-phosphate + NAD(+) = dihydroxyacetone phosphate + NADH + H(+). Plays a role in regulating cardiac sodium current; decreased enzymatic activity with resulting increased levels of glycerol 3-phosphate activating the DPD1L-dependent SCN5A phosphorylation pathway, may ultimately lead to decreased sodium current; cardiac sodium current may also be reduced due to alterations of NAD(H) balance induced by DPD1L. The sequence is that of Glycerol-3-phosphate dehydrogenase 1-like protein (GPD1L) from Pongo abelii (Sumatran orangutan).